We begin with the raw amino-acid sequence, 320 residues long: Undecaprenyl-diphosphatase (320 aa).

The next 8 helical transmembrane spans lie at 9-29 (FVLV…LEVF), 82-102 (GVAF…WYFW), 130-150 (LGII…KKLI), 161-181 (LGAI…GEKL), 191-211 (LTMQ…IPGV), 236-256 (FLLG…DVFA), 265-285 (LPLI…IAGL), and 296-316 (VFIW…SAGI).

The protein belongs to the UppP family.

The protein localises to the cell inner membrane. It carries out the reaction di-trans,octa-cis-undecaprenyl diphosphate + H2O = di-trans,octa-cis-undecaprenyl phosphate + phosphate + H(+). Functionally, catalyzes the dephosphorylation of undecaprenyl diphosphate (UPP). Confers resistance to bacitracin. The protein is Undecaprenyl-diphosphatase of Trichormus variabilis (strain ATCC 29413 / PCC 7937) (Anabaena variabilis).